Consider the following 143-residue polypeptide: Large ribosomal subunit protein uL16 (143 aa).

It belongs to the universal ribosomal protein uL16 family. Part of the 50S ribosomal subunit.

Functionally, binds 23S rRNA and is also seen to make contacts with the A and possibly P site tRNAs. The polypeptide is Large ribosomal subunit protein uL16 (Thermosynechococcus vestitus (strain NIES-2133 / IAM M-273 / BP-1)).